Consider the following 480-residue polypeptide: Proline--tRNA ligase (480 aa).

This sequence belongs to the class-II aminoacyl-tRNA synthetase family. ProS type 3 subfamily. Homodimer.

It localises to the cytoplasm. It catalyses the reaction tRNA(Pro) + L-proline + ATP = L-prolyl-tRNA(Pro) + AMP + diphosphate. Catalyzes the attachment of proline to tRNA(Pro) in a two-step reaction: proline is first activated by ATP to form Pro-AMP and then transferred to the acceptor end of tRNA(Pro). The polypeptide is Proline--tRNA ligase (Mycobacterium leprae (strain Br4923)).